Consider the following 509-residue polypeptide: UDP-N-acetylmuramoyl-L-alanyl-D-glutamate--2,6-diaminopimelate ligase (509 aa).

Serine 30 is a UDP-N-acetyl-alpha-D-muramoyl-L-alanyl-D-glutamate binding site. ATP is bound at residue 110 to 116 (GTNGKTT). UDP-N-acetyl-alpha-D-muramoyl-L-alanyl-D-glutamate-binding positions include 152–153 (TT), serine 179, glutamine 185, and arginine 187. N6-carboxylysine is present on lysine 219. Residues arginine 385, 409–412 (DNPR), glycine 476, and glutamate 480 each bind meso-2,6-diaminopimelate. A Meso-diaminopimelate recognition motif motif is present at residues 409 to 412 (DNPR).

The protein belongs to the MurCDEF family. MurE subfamily. The cofactor is Mg(2+). Carboxylation is probably crucial for Mg(2+) binding and, consequently, for the gamma-phosphate positioning of ATP.

The protein resides in the cytoplasm. The enzyme catalyses UDP-N-acetyl-alpha-D-muramoyl-L-alanyl-D-glutamate + meso-2,6-diaminopimelate + ATP = UDP-N-acetyl-alpha-D-muramoyl-L-alanyl-gamma-D-glutamyl-meso-2,6-diaminopimelate + ADP + phosphate + H(+). It functions in the pathway cell wall biogenesis; peptidoglycan biosynthesis. Its function is as follows. Catalyzes the addition of meso-diaminopimelic acid to the nucleotide precursor UDP-N-acetylmuramoyl-L-alanyl-D-glutamate (UMAG) in the biosynthesis of bacterial cell-wall peptidoglycan. The sequence is that of UDP-N-acetylmuramoyl-L-alanyl-D-glutamate--2,6-diaminopimelate ligase from Geobacter sulfurreducens (strain ATCC 51573 / DSM 12127 / PCA).